Here is a 308-residue protein sequence, read N- to C-terminus: Probable manganese-dependent inorganic pyrophosphatase (308 aa).

Residues histidine 9, aspartate 13, aspartate 15, aspartate 75, histidine 97, and aspartate 149 each coordinate Mn(2+).

It belongs to the PPase class C family. Mn(2+) serves as cofactor.

The protein localises to the cytoplasm. The enzyme catalyses diphosphate + H2O = 2 phosphate + H(+). The sequence is that of Probable manganese-dependent inorganic pyrophosphatase from Enterococcus faecalis (strain ATCC 700802 / V583).